A 365-amino-acid chain; its full sequence is DNA replication and repair protein RecF (365 aa).

Glycine 30–threonine 37 contacts ATP.

It belongs to the RecF family.

The protein resides in the cytoplasm. Functionally, the RecF protein is involved in DNA metabolism; it is required for DNA replication and normal SOS inducibility. RecF binds preferentially to single-stranded, linear DNA. It also seems to bind ATP. The protein is DNA replication and repair protein RecF of Geobacter sulfurreducens (strain ATCC 51573 / DSM 12127 / PCA).